We begin with the raw amino-acid sequence, 208 residues long: Large ribosomal subunit protein uL4 (208 aa).

The tract at residues 44-89 (RRQGTHKAKNRSEVRGGGRKPYRQKGTGHARQGSTRSPLMTGGGTI) is disordered. Basic residues predominate over residues 60–71 (GGRKPYRQKGTG).

This sequence belongs to the universal ribosomal protein uL4 family. As to quaternary structure, part of the 50S ribosomal subunit.

Its function is as follows. One of the primary rRNA binding proteins, this protein initially binds near the 5'-end of the 23S rRNA. It is important during the early stages of 50S assembly. It makes multiple contacts with different domains of the 23S rRNA in the assembled 50S subunit and ribosome. Forms part of the polypeptide exit tunnel. The protein is Large ribosomal subunit protein uL4 of Chlorobium phaeobacteroides (strain BS1).